The sequence spans 135 residues: Large ribosomal subunit protein uL16c (135 aa).

This sequence belongs to the universal ribosomal protein uL16 family. In terms of assembly, part of the 50S ribosomal subunit.

It is found in the plastid. The protein localises to the chloroplast. This chain is Large ribosomal subunit protein uL16c, found in Lotus japonicus (Lotus corniculatus var. japonicus).